A 138-amino-acid chain; its full sequence is Transcriptional regulator MraZ (138 aa).

SpoVT-AbrB domains are found at residues 3–45 (EFQH…PLAE) and 74–117 (ATEC…AAER).

It belongs to the MraZ family. As to quaternary structure, forms oligomers.

The protein resides in the cytoplasm. Its subcellular location is the nucleoid. This chain is Transcriptional regulator MraZ, found in Symbiobacterium thermophilum (strain DSM 24528 / JCM 14929 / IAM 14863 / T).